The chain runs to 195 residues: ATP-dependent Clp protease proteolytic subunit (195 aa).

Serine 98 serves as the catalytic Nucleophile. Residue histidine 123 is part of the active site.

It belongs to the peptidase S14 family. As to quaternary structure, fourteen ClpP subunits assemble into 2 heptameric rings which stack back to back to give a disk-like structure with a central cavity, resembling the structure of eukaryotic proteasomes.

The protein resides in the cytoplasm. It carries out the reaction Hydrolysis of proteins to small peptides in the presence of ATP and magnesium. alpha-casein is the usual test substrate. In the absence of ATP, only oligopeptides shorter than five residues are hydrolyzed (such as succinyl-Leu-Tyr-|-NHMec, and Leu-Tyr-Leu-|-Tyr-Trp, in which cleavage of the -Tyr-|-Leu- and -Tyr-|-Trp bonds also occurs).. Cleaves peptides in various proteins in a process that requires ATP hydrolysis. Has a chymotrypsin-like activity. Plays a major role in the degradation of misfolded proteins. This Thermoanaerobacter pseudethanolicus (strain ATCC 33223 / 39E) (Clostridium thermohydrosulfuricum) protein is ATP-dependent Clp protease proteolytic subunit.